The primary structure comprises 302 residues: Glycine--tRNA ligase alpha subunit (302 aa).

This sequence belongs to the class-II aminoacyl-tRNA synthetase family. Tetramer of two alpha and two beta subunits.

The protein resides in the cytoplasm. It carries out the reaction tRNA(Gly) + glycine + ATP = glycyl-tRNA(Gly) + AMP + diphosphate. The polypeptide is Glycine--tRNA ligase alpha subunit (Xanthomonas campestris pv. campestris (strain 8004)).